The following is a 258-amino-acid chain: Uroplakin-1a (258 aa).

Residues 1–14 (MASAAAATTEKGSP) are Cytoplasmic-facing. A helical membrane pass occupies residues 15 to 35 (VVVGLLVMGNIIILLSGLALF). The Extracellular segment spans residues 36–59 (AETVWVTADQYRIYPLMGVSGKDD). Residues 60 to 86 (VFAGAWIAIFCGFSFFVVASFGVGAAL) form a helical membrane-spanning segment. Topologically, residues 87–91 (CRRRS) are cytoplasmic. The helical transmembrane segment at 92–112 (MILTYLILMLIIYIFECASCI) threads the bilayer. Residues 113–230 (TSYTHRDYMV…HIGHAIDSYT (118 aa)) lie on the Extracellular side of the membrane. An N-linked (GlcNAc...) asparagine glycan is attached at Asn170. The chain crosses the membrane as a helical span at residues 231 to 252 (WGISWFGFAILMWTLPVMLIAM). The Cytoplasmic segment spans residues 253 to 258 (YFYTTL).

Belongs to the tetraspanin (TM4SF) family. Homodimer; disulfide-linked. Interacts with uroplakin-2 (UPK2). The N-terminus is blocked. In terms of processing, N-glycosylated with high-mannose oligosaccharides. As to expression, bladder epithelium.

It localises to the membrane. Functionally, component of the asymmetric unit membrane (AUM); a highly specialized biomembrane elaborated by terminally differentiated urothelial cells. May play an important role in normal bladder epithelial physiology, possibly in regulating membrane permeability of superficial umbrella cells or in stabilizing the apical membrane through AUM/cytoskeletal interactions. The protein is Uroplakin-1a (UPK1A) of Bos taurus (Bovine).